The chain runs to 260 residues: Dolichol-phosphate mannosyltransferase subunit 1 (260 aa).

Positions 1–20 are disordered; it reads MAAEEASRSSPRFRREPKGR. Residue alanine 2 is modified to N-acetylalanine. Residue serine 9 is modified to Phosphoserine. Residues proline 32, tyrosine 34, glutamate 36, isoleucine 63, aspartate 65, aspartate 118, alanine 119, aspartate 120, arginine 147, arginine 234, and lysine 240 each contribute to the GDP-alpha-D-mannose site. Aspartate 120 contacts Mg(2+). Residue aspartate 120 participates in Mn(2+) binding.

Belongs to the glycosyltransferase 2 family. In terms of assembly, component of the dolichol-phosphate mannose (DPM) synthase complex composed of DPM1, DPM2 and DPM3; within the complex, directly interacts with DPM3. This interaction may stabilize DPM1. Mg(2+) is required as a cofactor. The cofactor is Mn(2+). It depends on Ca(2+) as a cofactor.

The protein resides in the endoplasmic reticulum. The catalysed reaction is a di-trans,poly-cis-dolichyl phosphate + GDP-alpha-D-mannose = a di-trans,poly-cis-dolichyl beta-D-mannosyl phosphate + GDP. It participates in protein modification; protein glycosylation. Its function is as follows. Transfers mannose from GDP-mannose to dolichol monophosphate to form dolichol phosphate mannose (Dol-P-Man) which is the mannosyl donor in pathways leading to N-glycosylation, glycosyl phosphatidylinositol membrane anchoring, and O-mannosylation of proteins; catalytic subunit of the dolichol-phosphate mannose (DPM) synthase complex. This chain is Dolichol-phosphate mannosyltransferase subunit 1 (DPM1), found in Bos taurus (Bovine).